A 39-amino-acid polypeptide reads, in one-letter code: Anthranilate phosphoribosyltransferase (39 aa).

Belongs to the anthranilate phosphoribosyltransferase family. In terms of assembly, homodimer.

It catalyses the reaction N-(5-phospho-beta-D-ribosyl)anthranilate + diphosphate = 5-phospho-alpha-D-ribose 1-diphosphate + anthranilate. Its pathway is amino-acid biosynthesis; L-tryptophan biosynthesis; L-tryptophan from chorismate: step 2/5. Catalyzes the transfer of the phosphoribosyl group of 5-phosphorylribose-1-pyrophosphate (PRPP) to anthranilate to yield N-(5'-phosphoribosyl)-anthranilate (PRA). This chain is Anthranilate phosphoribosyltransferase (trpD), found in Pectobacterium carotovorum (Erwinia carotovora).